The sequence spans 532 residues: 2,3-bisphosphoglycerate-independent phosphoglycerate mutase (532 aa).

Residues Asp-15 and Ser-65 each contribute to the Mn(2+) site. The active-site Phosphoserine intermediate is Ser-65. Substrate is bound by residues His-126, 156–157 (RD), Arg-188, Arg-194, 258–261 (RPDR), and Lys-331. Residues Asp-398, His-402, Asp-439, His-440, and His-457 each contribute to the Mn(2+) site.

Belongs to the BPG-independent phosphoglycerate mutase family. Monomer. Mn(2+) serves as cofactor.

The enzyme catalyses (2R)-2-phosphoglycerate = (2R)-3-phosphoglycerate. Its pathway is carbohydrate degradation; glycolysis; pyruvate from D-glyceraldehyde 3-phosphate: step 3/5. In terms of biological role, catalyzes the interconversion of 2-phosphoglycerate and 3-phosphoglycerate. In Synechocystis sp. (strain ATCC 27184 / PCC 6803 / Kazusa), this protein is 2,3-bisphosphoglycerate-independent phosphoglycerate mutase.